The primary structure comprises 421 residues: NADH-quinone oxidoreductase subunit F (421 aa).

Position 54-63 (54-63 (GRGGAGFSTG)) interacts with NAD(+). FMN is bound at residue 166 to 213 (GAGAYICGEETALLESLEGKKGMPRLKPPFPAGFGLYGCPTTINNVES). [4Fe-4S] cluster contacts are provided by cysteine 344, cysteine 347, cysteine 350, and cysteine 390.

This sequence belongs to the complex I 51 kDa subunit family. The cofactor is FMN. [4Fe-4S] cluster is required as a cofactor.

The enzyme catalyses a quinone + NADH + 5 H(+)(in) = a quinol + NAD(+) + 4 H(+)(out). In terms of biological role, NDH-1 shuttles electrons from NADH, via FMN and iron-sulfur (Fe-S) centers, to quinones in the respiratory chain. Couples the redox reaction to proton translocation (for every two electrons transferred, four hydrogen ions are translocated across the cytoplasmic membrane), and thus conserves the redox energy in a proton gradient. The sequence is that of NADH-quinone oxidoreductase subunit F (nuoF) from Rickettsia conorii (strain ATCC VR-613 / Malish 7).